Reading from the N-terminus, the 156-residue chain is ATP synthase subunit b (156 aa).

The chain crosses the membrane as a helical span at residues 12-32; it reads VAFFIFVIFCMKFVWPPVIAA.

It belongs to the ATPase B chain family. F-type ATPases have 2 components, F(1) - the catalytic core - and F(0) - the membrane proton channel. F(1) has five subunits: alpha(3), beta(3), gamma(1), delta(1), epsilon(1). F(0) has three main subunits: a(1), b(2) and c(10-14). The alpha and beta chains form an alternating ring which encloses part of the gamma chain. F(1) is attached to F(0) by a central stalk formed by the gamma and epsilon chains, while a peripheral stalk is formed by the delta and b chains.

It is found in the cell inner membrane. In terms of biological role, f(1)F(0) ATP synthase produces ATP from ADP in the presence of a proton or sodium gradient. F-type ATPases consist of two structural domains, F(1) containing the extramembraneous catalytic core and F(0) containing the membrane proton channel, linked together by a central stalk and a peripheral stalk. During catalysis, ATP synthesis in the catalytic domain of F(1) is coupled via a rotary mechanism of the central stalk subunits to proton translocation. Component of the F(0) channel, it forms part of the peripheral stalk, linking F(1) to F(0). In Pseudomonas savastanoi pv. phaseolicola (strain 1448A / Race 6) (Pseudomonas syringae pv. phaseolicola (strain 1448A / Race 6)), this protein is ATP synthase subunit b.